We begin with the raw amino-acid sequence, 545 residues long: CTP synthase (545 aa).

The tract at residues 1-264 (MQYIVVTGGV…ITRLSKLLNM (264 aa)) is amidoligase domain. CTP is bound at residue S12. Residue S12 participates in UTP binding. 13–18 (GLGKGT) is a binding site for ATP. Residue Y53 participates in L-glutamine binding. D70 is a binding site for ATP. Mg(2+) is bound by residues D70 and E140. CTP is bound by residues 147-149 (DIE), 185-190 (KTKPTQ), and R221. UTP contacts are provided by residues 185–190 (KTKPTQ) and R221. In terms of domain architecture, Glutamine amidotransferase type-1 spans 294–527 (YVDLHDAYIS…VEQALIFKHR (234 aa)). G347 contacts L-glutamine. Residue C374 is the Nucleophile; for glutamine hydrolysis of the active site. L-glutamine contacts are provided by residues 375-378 (LGFQ), E398, and R455. Catalysis depends on residues H500 and E502.

This sequence belongs to the CTP synthase family. In terms of assembly, homotetramer.

It catalyses the reaction UTP + L-glutamine + ATP + H2O = CTP + L-glutamate + ADP + phosphate + 2 H(+). The enzyme catalyses L-glutamine + H2O = L-glutamate + NH4(+). The catalysed reaction is UTP + NH4(+) + ATP = CTP + ADP + phosphate + 2 H(+). It participates in pyrimidine metabolism; CTP biosynthesis via de novo pathway; CTP from UDP: step 2/2. Allosterically activated by GTP, when glutamine is the substrate; GTP has no effect on the reaction when ammonia is the substrate. The allosteric effector GTP functions by stabilizing the protein conformation that binds the tetrahedral intermediate(s) formed during glutamine hydrolysis. Inhibited by the product CTP, via allosteric rather than competitive inhibition. In terms of biological role, catalyzes the ATP-dependent amination of UTP to CTP with either L-glutamine or ammonia as the source of nitrogen. Regulates intracellular CTP levels through interactions with the four ribonucleotide triphosphates. This is CTP synthase from Thermoplasma acidophilum (strain ATCC 25905 / DSM 1728 / JCM 9062 / NBRC 15155 / AMRC-C165).